Reading from the N-terminus, the 206-residue chain is Recombination protein RecR (206 aa).

Residues 58–73 (CNICGYITEKNICNFC) form a C4-type zinc finger. Positions 81 to 178 (STIMIVADNR…KITKLAYGIP (98 aa)) constitute a Toprim domain.

It belongs to the RecR family.

Its function is as follows. May play a role in DNA repair. It seems to be involved in an RecBC-independent recombinational process of DNA repair. It may act with RecF and RecO. This chain is Recombination protein RecR, found in Phytoplasma mali (strain AT).